Here is a 321-residue protein sequence, read N- to C-terminus: Cytochrome c biogenesis protein CcsA (321 aa).

7 helical membrane-spanning segments follow: residues 9–29 (ILTH…LITL), 44–64 (GMIA…ASSG), 68–88 (LSNL…LHMI), 143–163 (MLLS…LLMI), 226–246 (VISL…VWAN), 260–274 (TWAF…IYLH), and 289–309 (VASI…LLGI).

This sequence belongs to the CcmF/CycK/Ccl1/NrfE/CcsA family. In terms of assembly, may interact with Ccs1.

It is found in the plastid. Its subcellular location is the chloroplast thylakoid membrane. In terms of biological role, required during biogenesis of c-type cytochromes (cytochrome c6 and cytochrome f) at the step of heme attachment. The polypeptide is Cytochrome c biogenesis protein CcsA (Oryza sativa (Rice)).